Reading from the N-terminus, the 149-residue chain is Natriuretic peptides A (149 aa).

Positions 1 to 23 (MGSPIAASFLLFLAVQLLGQTGA) are cleaved as a signal peptide. 2 propeptides span residues 24 to 121 (NPVY…AAPR) and 91 to 101 (DGGALGRSPWD). The interval 49–103 (MPLEDEAESPQALSEQNAEAGAALSPLPEVPPWTGEVSPAQRDGGALGRSPWDSS) is disordered. Ser-127 is subject to Phosphoserine. Cys-128 and Cys-144 form a disulfide bridge. The segment at 145 to 149 (NSFRY) is important for degradation of atrial natriuretic peptide by IDE.

This sequence belongs to the natriuretic peptide family. As to quaternary structure, homodimer; disulfide-linked antiparallel dimer. In terms of processing, the precursor molecule is proteolytically cleaved by CORIN at Arg-121 to produce the atrial natriuretic peptide. Undergoes further proteolytic cleavage by unknown proteases to give rise to long-acting natriuretic peptide, vessel dilator and kaliuretic peptide. Additional processing gives rise to the auriculin and atriopeptin peptides. In the kidneys, alternative processing by an unknown protease results in the peptide urodilatin. Cleavage by MME initiates degradation of the factor and thereby regulates its activity. Degradation by IDE results in reduced activation of NPR1 (in vitro). During IDE degradation, the resulting products can temporarily stimulate NPR2 to produce cGMP, before the fragments are completely degraded and inactivated by IDE (in vitro). Post-translationally, degraded by IDE. In terms of processing, phosphorylation on Ser-127 decreases vasorelaxant activity.

Its subcellular location is the secreted. It is found in the perikaryon. The protein localises to the cell projection. Its function is as follows. Hormone that plays a key role in mediating cardio-renal homeostasis, and is involved in vascular remodeling and regulating energy metabolism. Acts by specifically binding and stimulating NPR1 to produce cGMP, which in turn activates effector proteins, such as PRKG1, that drive various biological responses. Regulates vasodilation, natriuresis, diuresis and aldosterone synthesis and is therefore essential for regulating blood pressure, controlling the extracellular fluid volume and maintaining the fluid-electrolyte balance. Also involved in inhibiting cardiac remodeling and cardiac hypertrophy by inducing cardiomyocyte apoptosis and attenuating the growth of cardiomyocytes and fibroblasts. Plays a role in female pregnancy by promoting trophoblast invasion and spiral artery remodeling in uterus, and thus prevents pregnancy-induced hypertension. In adipose tissue, acts in various cGMP- and PKG-dependent pathways to regulate lipid metabolism and energy homeostasis. This includes up-regulating lipid metabolism and mitochondrial oxygen utilization by activating the AMP-activated protein kinase (AMPK), and increasing energy expenditure by acting via MAPK11 to promote the UCP1-dependent thermogenesis of brown adipose tissue. Binds the clearance receptor NPR3 which removes the hormone from circulation. In terms of biological role, may have a role in cardio-renal homeostasis through regulation of natriuresis, diuresis, vasodilation, and inhibiting aldosterone synthesis. In vitro, promotes the production of cGMP and induces vasodilation. May promote natriuresis, at least in part, by enhancing prostaglandin E2 synthesis resulting in the inhibition of renal Na+-K+-ATPase. However reports on the involvement of this peptide in mammal blood volume and blood pressure homeostasis are conflicting; according to a report, in vivo it is not sufficient to activate cGMP and does not inhibit collecting duct transport nor effect diuresis and natriuresis. Appears to bind to specific receptors that are distinct from the receptors bound by atrial natriuretic peptide and vessel dilator. Possibly enhances protein excretion in urine by decreasing proximal tubular protein reabsorption. May have a role in cardio-renal homeostasis through regulation of natriuresis, diuresis, and vasodilation. In vitro, promotes the production of cGMP and induces vasodilation. May promote natriuresis, at least in part, by enhancing prostaglandin E2 synthesis resulting in the inhibition of renal Na+-K+-ATPase. However reports on the involvement of this peptide in mammal blood volume and blood pressure homeostasis are conflicting; according to a report it is not sufficient to activate cGMP and does not inhibit collecting duct transport nor effect diuresis and natriuresis. Appears to bind to specific receptors that are distinct from the receptors bound by the atrial natriuretic and long-acting natriuretic peptides. Possibly functions in protein excretion in urine by maintaining the integrity of the proximal tubules and enhancing protein excretion by decreasing proximal tubular protein reabsorption. Functionally, may have a role in cardio-renal homeostasis through regulation of diuresis and inhibiting aldosterone synthesis. In vitro, promotes the production of cGMP and induces vasodilation. May promote natriuresis, at least in part, by enhancing prostaglandin E2 synthesis resulting in the inhibition of renal Na+-K+-ATPase. May have a role in potassium excretion but not sodium excretion (natriuresis). Possibly enhances protein excretion in urine by decreasing proximal tubular protein reabsorption. Its function is as follows. Hormone produced in the kidneys that appears to be important for maintaining cardio-renal homeostasis. Mediates vasodilation, natriuresis and diuresis primarily in the renal system, in order to maintain the extracellular fluid volume and control the fluid-electrolyte balance. Specifically binds and stimulates cGMP production by renal transmembrane receptors, likely NPR1. Urodilatin not ANP, may be the natriuretic peptide responsible for the regulation of sodium and water homeostasis in the kidney. In terms of biological role, may have a role in cardio-renal homeostasis through regulation of natriuresis and vasodilation. In vivo promotes natriuresis and in vitro, vasodilates renal artery strips. May have a role in cardio-renal homeostasis through regulation of regulation of natriuresis and vasodilation. In vivo promotes natriuresis. In vitro, vasodilates intestinal smooth muscle but not smooth muscle strips. Functionally, may have a role in cardio-renal homeostasis through regulation of natriuresis and vasodilation. In vivo promotes natriuresis. In vitro, selectively vasodilates intestinal and vascular smooth muscle strips. Its function is as follows. May have a role in cardio-renal homeostasis through regulation of natriuresis and vasodilation. In vivo promotes natriuresis. In vitro, selectively vasodilates intestinal smooth muscle but not vascular smooth muscle strips. The polypeptide is Natriuretic peptides A (NPPA) (Canis lupus familiaris (Dog)).